The sequence spans 375 residues: Anhydro-N-acetylmuramic acid kinase (375 aa).

ATP is bound at residue 14-21; that stretch reads GTSMDGAD.

This sequence belongs to the anhydro-N-acetylmuramic acid kinase family.

The enzyme catalyses 1,6-anhydro-N-acetyl-beta-muramate + ATP + H2O = N-acetyl-D-muramate 6-phosphate + ADP + H(+). The protein operates within amino-sugar metabolism; 1,6-anhydro-N-acetylmuramate degradation. It participates in cell wall biogenesis; peptidoglycan recycling. Catalyzes the specific phosphorylation of 1,6-anhydro-N-acetylmuramic acid (anhMurNAc) with the simultaneous cleavage of the 1,6-anhydro ring, generating MurNAc-6-P. Is required for the utilization of anhMurNAc either imported from the medium or derived from its own cell wall murein, and thus plays a role in cell wall recycling. The chain is Anhydro-N-acetylmuramic acid kinase from Cupriavidus pinatubonensis (strain JMP 134 / LMG 1197) (Cupriavidus necator (strain JMP 134)).